A 235-amino-acid polypeptide reads, in one-letter code: UPF0758 protein Swol_1642 (235 aa).

The 127-residue stretch at 109-235 (IIKSPEDVQE…YCSLKARGLI (127 aa)) folds into the MPN domain. 3 residues coordinate Zn(2+): histidine 184, histidine 186, and aspartate 197. The JAMM motif motif lies at 184 to 197 (HNHPSGDPTPSQED).

The protein belongs to the UPF0758 family.

The chain is UPF0758 protein Swol_1642 from Syntrophomonas wolfei subsp. wolfei (strain DSM 2245B / Goettingen).